Reading from the N-terminus, the 1320-residue chain is Sal-like protein 3 (1320 aa).

Basic residues predominate over residues 1 to 11; that stretch reads MSRRKQAKPQH. The tract at residues 1 to 49 is disordered; the sequence is MSRRKQAKPQHLKSDEELPPQDGASEHGVPGDGAEDADSGSESRSGSEE. The span at 40–49 shows a compositional bias: low complexity; it reads GSESRSGSEE. The segment at 51–73 adopts a C2H2-type 1; atypical zinc-finger fold; it reads SVCEKCCAEFFKWADFLQHKKTC. Disordered stretches follow at residues 84–166 and 271–367; these read DDEP…AFSM and LSAG…NLPN. Over residues 88–100 the composition is skewed to pro residues; it reads APPSEDFPEPSPA. A Phosphoserine modification is found at Ser-109. The span at 121–131 shows a compositional bias: basic and acidic residues; it reads SEVKAATKEAE. Over residues 143–160 the composition is skewed to pro residues; the sequence is PPGPSVPPPPPALPPQPE. A compositionally biased stretch (low complexity) spans 271-289; it reads LSAGPATASAGSGSTLPAA. Over residues 295-311 the composition is skewed to polar residues; that stretch reads HLSQPASGTSTPCSTSA. 2 stretches are compositionally biased toward low complexity: residues 323-342 and 355-367; these read STGP…GNAV and PGPL…NLPN. 2 C2H2-type zinc fingers span residues 427 to 449 and 455 to 477; these read HKCR…LRSH and FKCN…FQRH. Residues 534-623 form a disordered region; sequence GLQLPPTVPG…RTGDAPVVGG (90 aa). A compositionally biased stretch (polar residues) spans 543–554; sequence GTHNYTDSPSIT. A compositionally biased stretch (low complexity) spans 555–568; that stretch reads PVSRSPQRPSPASS. The segment covering 569–583 has biased composition (polar residues); sequence ECTSLSPGLNNTESG. 3 consecutive C2H2-type zinc fingers follow at residues 692–714, 720–742, and 752–774; these read NQCV…YRTH, FKCK…FGVH, and HSCP…IRMH. Disordered stretches follow at residues 807–846 and 878–972; these read SSFD…PPSP and VENG…GHPG. The segment covering 809–823 has biased composition (acidic residues); the sequence is FDDDIDENSMEEDSE. 2 stretches are compositionally biased toward low complexity: residues 834 to 846 and 902 to 923; these read PLLS…PPSP and RSAG…PAHS. Ser-932 is subject to Phosphoserine. C2H2-type zinc fingers lie at residues 997–1019, 1025–1047, 1133–1155, and 1161–1183; these read TVCG…YRSH, FVCT…LLTH, HNCQ…ERTH, and FGCT…MGTH. Ser-1197 carries the phosphoserine modification.

This sequence belongs to the sal C2H2-type zinc-finger protein family. As to expression, in adult brain, testis and kidney. In lower levels also in adult ovaries and embryonic stem cells. In embryo in developing neuroectoderm of brain, inner ear and spinal cord. Also weakly and transiently expressed in embryonic branchial arches, notochord, limb buds and heart.

The protein resides in the nucleus. Probable transcription factor. The chain is Sal-like protein 3 (Sall3) from Mus musculus (Mouse).